Here is a 393-residue protein sequence, read N- to C-terminus: Prokineticin receptor 1 (393 aa).

Topologically, residues 1-62 are extracellular; it reads METTVGALGE…TNSRTFFAAK (62 aa). The N-linked (GlcNAc...) asparagine glycan is linked to asparagine 11. The helical transmembrane segment at 63–83 threads the bilayer; the sequence is IVIGMALVGIMLVCGIGNFIF. Residues 84-98 lie on the Cytoplasmic side of the membrane; that stretch reads ITALARYKKLRNLTN. A helical transmembrane segment spans residues 99–119; that stretch reads LLIANLAISDFLVAIVCCPFE. The Extracellular segment spans residues 120–146; sequence MDYYVVRQLSWEHGHVLCASVNYLRTV. Cysteine 137 and cysteine 217 are joined by a disulfide. Residues 147–167 form a helical membrane-spanning segment; the sequence is SLYVSTNALLAIAIDRYLAIV. Topologically, residues 168–179 are cytoplasmic; that stretch reads HPLRPRMKCQTA. The chain crosses the membrane as a helical span at residues 180–200; it reads AGLIFLVWSVSILIAIPAAYF. Topologically, residues 201–232 are extracellular; that stretch reads TTETVLVIVERQEKIFCGQIWPVDQQFYYRSY. Residues 233 to 253 form a helical membrane-spanning segment; the sequence is FLLVFGLEFVGPVVAMTLCYA. Topologically, residues 254–282 are cytoplasmic; sequence RVSRELWFKAVPGFQTEQIRRRLRCRRRT. A helical transmembrane segment spans residues 283–303; it reads VLGLVCVLSAYVLCWAPFYGF. Residues 304 to 322 lie on the Extracellular side of the membrane; the sequence is TIVRDFFPSVFVKEKHYLT. Residues 323–343 form a helical membrane-spanning segment; the sequence is AFYVVECIAMSNSMINTLCFV. At 344–393 the chain is on the cytoplasmic side; that stretch reads TVRNNTSKYLKRILRLQWRASPSGSKASADLDLRTTGIPATEEVDCIRLK.

This sequence belongs to the G-protein coupled receptor 1 family. Expressed at high levels in the heart, skeletal muscle and pancreas. Expressed at lower levels in the brain, lung, liver and kidney.

It is found in the cell membrane. Its function is as follows. Receptor for prokineticin 1. Exclusively coupled to the G(q) subclass of heteromeric G proteins. Activation leads to mobilization of calcium, stimulation of phosphoinositide turnover and activation of p44/p42 mitogen-activated protein kinase. May play a role during early pregnancy. The chain is Prokineticin receptor 1 (Prokr1) from Mus musculus (Mouse).